We begin with the raw amino-acid sequence, 203 residues long: FMN-dependent NADH:quinone oxidoreductase (203 aa).

FMN-binding positions include Ser-9, 15–17 (SVS), and 138–141 (SRGG).

It belongs to the azoreductase type 1 family. In terms of assembly, homodimer. It depends on FMN as a cofactor.

The enzyme catalyses 2 a quinone + NADH + H(+) = 2 a 1,4-benzosemiquinone + NAD(+). It catalyses the reaction N,N-dimethyl-1,4-phenylenediamine + anthranilate + 2 NAD(+) = 2-(4-dimethylaminophenyl)diazenylbenzoate + 2 NADH + 2 H(+). Functionally, quinone reductase that provides resistance to thiol-specific stress caused by electrophilic quinones. Its function is as follows. Also exhibits azoreductase activity. Catalyzes the reductive cleavage of the azo bond in aromatic azo compounds to the corresponding amines. The protein is FMN-dependent NADH:quinone oxidoreductase of Methylorubrum extorquens (strain PA1) (Methylobacterium extorquens).